Consider the following 549-residue polypeptide: Undecaprenyl phosphate-alpha-4-amino-4-deoxy-L-arabinose arabinosyl transferase 2 (549 aa).

12 helical membrane passes run 9-29 (LLLGIFLLAYLLPLGSHGLWI), 80-102 (LFGVRFASALSTGLSVLLCFLIA), 112-132 (SFVCALLYMSFVIVAGQAGYA), 133-153 (NLDPQFTFWVNLSLVALWFAL), 176-196 (FMTKGFLAWLLPVLIALPWML), 204-224 (LLLYGPVAIAVAIIVSLPWAL), 259-279 (FYLPLLVAFSLPWVGMLPVAF), 290-310 (GIAFLGLWLLMPLLFFSLSNG), 312-332 (LPTYILPCLLPLALLLGHALA), 342-362 (ALGLNGLLNLLLGLVTLIGLV), 377-397 (SLVLVFIALTGWIISNLLQAF), and 402-422 (CWAAPAVGSLLLIALLPAALP).

The protein belongs to the glycosyltransferase 83 family.

It localises to the cell inner membrane. The enzyme catalyses 4-amino-4-deoxy-alpha-L-arabinopyranosyl di-trans,octa-cis-undecaprenyl phosphate + lipid IVA = lipid IIA + di-trans,octa-cis-undecaprenyl phosphate.. Its pathway is lipopolysaccharide metabolism; 4-amino-4-deoxy-beta-L-arabinose-lipid A biosynthesis. Catalyzes the transfer of the L-Ara4N moiety of the glycolipid undecaprenyl phosphate-alpha-L-Ara4N to lipid A. The modified arabinose is attached to lipid A and is required for resistance to polymyxin and cationic antimicrobial peptides. The polypeptide is Undecaprenyl phosphate-alpha-4-amino-4-deoxy-L-arabinose arabinosyl transferase 2 (Pseudomonas fluorescens (strain Pf0-1)).